The primary structure comprises 216 residues: Probable GTP-binding protein EngB (216 aa).

Positions 26–200 (EGIEIAFAGR…RAKLDTWFAP (175 aa)) constitute an EngB-type G domain. Residues 34 to 41 (GRSNAGKS), 61 to 65 (GRTQL), 79 to 82 (DLPG), 146 to 149 (TKAD), and 179 to 181 (YSS) each bind GTP. Residues Ser41 and Thr63 each coordinate Mg(2+).

The protein belongs to the TRAFAC class TrmE-Era-EngA-EngB-Septin-like GTPase superfamily. EngB GTPase family. Mg(2+) is required as a cofactor.

Functionally, necessary for normal cell division and for the maintenance of normal septation. The polypeptide is Probable GTP-binding protein EngB (Vibrio vulnificus (strain CMCP6)).